A 996-amino-acid chain; its full sequence is Sarcoplasmic/endoplasmic reticulum calcium ATPase 1 (996 aa).

Over 1–48 the chain is Cytoplasmic; the sequence is MENAHTKSPAECLSYFGVNEHTGLSPDQFKKNLDKFGYNELPAEEGKS. A helical membrane pass occupies residues 49 to 69; sequence IWDLIVEQFEDLLVRILLLAA. Residues 70–89 lie on the Lumenal side of the membrane; the sequence is CISFVLAWFEEGEETITAFV. Residues 90–110 form a helical membrane-spanning segment; sequence EPFVILLILIANAIVGVWQER. At 111-253 the chain is on the cytoplasmic side; sequence NAEDAIEALK…QEKTPLQAKL (143 aa). The chain crosses the membrane as a helical span at residues 254–273; sequence DEFGEQLSKVISLICVAVWA. At 274-295 the chain is on the lumenal side; that stretch reads INIGHFNDPVHGGSWIRGAVYY. A helical membrane pass occupies residues 296-313; it reads FKIAVALAVAAIPEGLPA. Ca(2+)-binding residues include V304, A305, I307, and E309. The Cytoplasmic portion of the chain corresponds to 314–754; it reads VITTCLALGT…EEGRAIYNNM (441 aa). D351 (4-aspartylphosphate intermediate) is an active-site residue. Mg(2+) contacts are provided by D351 and T353. The ATP site is built by T353, E442, R489, K512, R557, T622, G623, D624, R675, and K681. D700 is a binding site for Mg(2+). N703 is a binding site for ATP. A helical membrane pass occupies residues 755 to 774; that stretch reads KQFIRYLISSNVGEVVCIFL. Positions 765 and 768 each coordinate Ca(2+). The Lumenal segment spans residues 775 to 784; that stretch reads TAALGLPEAL. A helical membrane pass occupies residues 785 to 805; it reads IPVQLLWVNLVTDGLPATALG. The interaction with PLN stretch occupies residues 785–805; the sequence is IPVQLLWVNLVTDGLPATALG. The Ca(2+) site is built by N793, T796, and D797. The Cytoplasmic portion of the chain corresponds to 806–825; it reads FNPPDLDIMGKPPRSPKEPL. Residues 826 to 848 form a helical membrane-spanning segment; that stretch reads ISGWLFFRYMAIGGYVGAATVGG. Over 849–894 the chain is Lumenal; it reads AAWWFLYDSTGPAVTYYQLSHFMQCHNHNEDFTGVDCDIFEASPPM. C873 and C885 are joined by a disulfide. Residues 895–914 form a helical membrane-spanning segment; that stretch reads TMALSVLVTIEMCNALNSLS. E905 lines the Ca(2+) pocket. At 915–927 the chain is on the cytoplasmic side; it reads ENQSLIRMPPWSN. Residues 928 to 946 form a helical membrane-spanning segment; it reads LWLMAAMTLSMSLHFMIIY. Residues 929 to 940 form an interaction with PLN region; sequence WLMAAMTLSMSL. Residues 947–961 lie on the Lumenal side of the membrane; the sequence is VDPLPMIFKLTHLTF. The helical transmembrane segment at 962–982 threads the bilayer; sequence DQWLMVFKLSFPVILIDEVLK. The Cytoplasmic segment spans residues 983–996; sequence FFARNYIETGKEVK.

The protein belongs to the cation transport ATPase (P-type) (TC 3.A.3) family. Type IIA subfamily. As to quaternary structure, interacts with sarcolipin (SLN). Interacts with phospholamban (PLN). Interacts with myoregulin (MRLN). Interacts with DWORF. It depends on Mg(2+) as a cofactor.

The protein localises to the endoplasmic reticulum membrane. Its subcellular location is the sarcoplasmic reticulum membrane. The catalysed reaction is Ca(2+)(in) + ATP + H2O = Ca(2+)(out) + ADP + phosphate + H(+). Its activity is regulated as follows. Inhibited by sarcolipin (SLN) and myoregulin (MRLN). Also shown to be inhibited by phospholamban (PLN) in vitro. Enhanced by DWORF; DWORF increases activity by displacing sarcolipin (SLN), phospholamban (PLN) and myoregulin (MRLN). In terms of biological role, key regulator of striated muscle performance by acting as the major Ca(2+) ATPase responsible for the reuptake of cytosolic Ca(2+) into the sarcoplasmic reticulum. Catalyzes the hydrolysis of ATP coupled with the translocation of calcium from the cytosol to the sarcoplasmic reticulum lumen. Contributes to calcium sequestration involved in muscular excitation/contraction. This Makaira nigricans (Atlantic blue marlin) protein is Sarcoplasmic/endoplasmic reticulum calcium ATPase 1 (atp2a1).